The primary structure comprises 270 residues: MAVITKIEVQKRSKERFNIYIDKGQGEEYGFSVNEVILIKHGLQKGLEIDEIALGNILYNEEVQKAYLQAISYLSYQMRTKLEIEDFLRKKEVGQAIISEVVSKLLHDRYINDKEYAILYTRTQSNVNRKGPTVIKRELLNKGVQDLIITHSLQEYPKEKQIENALILIEKKKKSYQKHSFLQMKLKLDEMLVRKGYSRDVIQICLEELKDEKDDEKQQEALHYHGNKYYEKYKKYDGWTFENKMKQALYRKGFSIDEIEIFLQMKREEG.

It belongs to the RecX family.

The protein localises to the cytoplasm. Modulates RecA activity. The chain is Regulatory protein RecX from Bacillus cereus (strain ZK / E33L).